Consider the following 151-residue polypeptide: SsrA-binding protein (151 aa).

A disordered region spans residues 121–151 (GKKLHDKRDTEKDREWQREKQRVMKNQRGAA). Residues 126–142 (DKRDTEKDREWQREKQR) show a composition bias toward basic and acidic residues.

This sequence belongs to the SmpB family.

It localises to the cytoplasm. In terms of biological role, required for rescue of stalled ribosomes mediated by trans-translation. Binds to transfer-messenger RNA (tmRNA), required for stable association of tmRNA with ribosomes. tmRNA and SmpB together mimic tRNA shape, replacing the anticodon stem-loop with SmpB. tmRNA is encoded by the ssrA gene; the 2 termini fold to resemble tRNA(Ala) and it encodes a 'tag peptide', a short internal open reading frame. During trans-translation Ala-aminoacylated tmRNA acts like a tRNA, entering the A-site of stalled ribosomes, displacing the stalled mRNA. The ribosome then switches to translate the ORF on the tmRNA; the nascent peptide is terminated with the 'tag peptide' encoded by the tmRNA and targeted for degradation. The ribosome is freed to recommence translation, which seems to be the essential function of trans-translation. In Chromobacterium violaceum (strain ATCC 12472 / DSM 30191 / JCM 1249 / CCUG 213 / NBRC 12614 / NCIMB 9131 / NCTC 9757 / MK), this protein is SsrA-binding protein.